Here is a 263-residue protein sequence, read N- to C-terminus: Transmembrane protein 176B (263 aa).

Transmembrane regions (helical) follow at residues L61–F81, A89–V109, V121–V141, and L197–V217. S231, S240, and S253 each carry phosphoserine. Residues E239–L263 form a disordered region.

The protein belongs to the TMEM176 family. In terms of tissue distribution, ubiquitously expressed with higher expression in lung, liver, kidney and colon. Expressed in cerebellar granule cells.

It is found in the nucleus membrane. Functionally, may play a role in the process of maturation of dendritic cells. Required for the development of cerebellar granule cells. The sequence is that of Transmembrane protein 176B (Tmem176b) from Mus musculus (Mouse).